Reading from the N-terminus, the 371-residue chain is Alginate lyase (371 aa).

Positions 1-28 are cleaved as a signal peptide; sequence MRRPMTLFKRISSPALLALALFGGAAHA. Substrate is bound by residues 67 to 68, 140 to 141, and Tyr-258; these read SK and HT.

Belongs to the polysaccharide lyase 5 family.

The protein resides in the periplasm. It carries out the reaction Eliminative cleavage of alginate to give oligosaccharides with 4-deoxy-alpha-L-erythro-hex-4-enuronosyl groups at their non-reducing ends and beta-D-mannuronate at their reducing end.. Functionally, catalyzes the depolymerization of alginate by cleaving the beta-1,4 glycosidic bond between two adjacent sugar residues via a beta-elimination mechanism. May serve to degrade mislocalized alginate that is trapped in the periplasmic space. This is Alginate lyase from Pseudomonas putida (strain ATCC 47054 / DSM 6125 / CFBP 8728 / NCIMB 11950 / KT2440).